The primary structure comprises 221 residues: Probable glutathione S-transferase parC (221 aa).

One can recognise a GST N-terminal domain in the interval 4 to 83 (EEVILLDFWP…YIEEVWKDKA (80 aa)). Glutathione is bound by residues Ser14, Lys41, Ile55, and 67 to 68 (ES). The 125-residue stretch at 90–214 (DPYDRAQARF…PKVLEFVKVL (125 aa)) folds into the GST C-terminal domain.

The protein belongs to the GST superfamily. Phi family. As to expression, abundant in seedlings and roots. It is also found in the shoot tips, flowers and leaves.

The catalysed reaction is RX + glutathione = an S-substituted glutathione + a halide anion + H(+). In terms of biological role, conjugation of reduced glutathione to a wide number of exogenous and endogenous hydrophobic electrophiles. The chain is Probable glutathione S-transferase parC (PARC) from Nicotiana tabacum (Common tobacco).